The primary structure comprises 448 residues: Beclin-1 (448 aa).

Methionine 1 is subject to N-acetylmethionine. 2 positions are modified to phosphoserine: serine 14 and serine 29. The disordered stretch occupies residues 47-72; it reads TTAQAKPGESQEEEANSGEEPFIETR. Phosphoserine; by AMPK is present on residues serine 88, serine 91, and serine 94. The short motif at 106 to 125 is the BH3 element; the sequence is TMENLSRRLKVTGDLFDIMS. The interaction with BCL2 and BCL2L1 isoform Bcl-X(L) stretch occupies residues 110 to 157; sequence LSRRLKVTGDLFDIMSGQTDVDHPLCEECTDTLLDQLDTQLNVTENEC. Residue threonine 117 is modified to Phosphothreonine; by DAPK1. Residues 140–267 adopt a coiled-coil conformation; sequence DTLLDQLDTQ…QLDKLKKTNV (128 aa). The interval 243–448 is evolutionary conserved domain (ECD); sequence DELKSVENQM…AWVSSQFYNK (206 aa). Residues lysine 400 and lysine 435 each participate in a glycyl lysine isopeptide (Lys-Gly) (interchain with G-Cter in ubiquitin) cross-link. The tract at residues 423–448 is required for membrane-association; sequence WTKALKFMLTNLKWGLAWVSSQFYNK.

Belongs to the beclin family. As to quaternary structure, a homodimeric form is proposed to exist; this metastable form readily transits to ATG14- or UVRAG-containing complexes with BECN1:UVRAG being more stable than BECN1:ATG14. Component of the PI3K (PI3KC3/PI3K-III/class III phosphatidylinositol 3-kinase) complex the core of which is composed of the catalytic subunit PIK3C3, the regulatory subunit PIK3R4 and BECN1 associating with additional regulatory/auxiliary subunits to form alternative complex forms. Alternative complex forms containing a fourth regulatory subunit in a mutually exclusive manner are PI3K complex I (PI3KC3-C1) containing ATG14, and PI3K complex II (PI3KC3-C2) containing UVRAG. PI3KC3-C1 displays a V-shaped architecture with PIK3R4 serving as a bridge between PIK3C3 and the ATG14:BECN1 subcomplex. Both, PI3KC3-C1 and PI3KC3-C2, can associate with further regulatory subunits, such as RUBCN, SH3GLB1/Bif-1 and AMBRA1. PI3KC3-C1 probably associates with PIK3CB. Forms a complex with PPP2CA and AMBRA1; AMBRA1 and BECN1 components of the complex regulate MYC stability via different pathways. Component of the complex, at least composed of LRPPRC, BECN1 and BCL2; the interactions prevent BECN1 from forming an autophagy-inducing complex with PIK3C3. Interacts with AMBRA1, GOPC, GRID2. Interacts with BCL2 and BCL2L1 isoform Bcl-X(L); the interaction inhibits BECN1 function in promoting autophagy by interfering with the formation of the PI3K complex. Interacts with cytosolic HMGB1; inhibits the interaction of BECN1 and BCL2 leading to promotion of autophagy. Interacts with USP10, USP13, DAPK1, RAB39A. Interacts with SLAMF1. Interacts with the poly-Gln domain of ATXN3; the interaction causes deubiquitination at Lys-400 and stabilizes BECN1. Interacts with VMP1. Interacts with TRIM5; the interaction causes activation of BECN1 by causing its dissociation from its inhibitors BCL2 and TAB2. Interacts with active ULK1 (phosphorylated on 'Ser-317') and MEFV simultaneously. Interacts with WDR81 and WDR91; negatively regulates the PI3 kinase/PI3K activity associated with endosomal membranes. Interacts with LAPTM4B; competes with EGFR for LAPTM4B binding; regulates EGFR activity. Interacts with TRIM50. Interacts with TRIM16. Interacts with ATG14; this interaction is increased in the absence of TMEM39A. Interacts with WASHC1; preventing interaction with AMBRA1 and the DCX(AMBRA1) complex and subsequent ubiquitination. Interacts with TRIM17. Interacts with BCL2L10/BCL-B (via BH1 domain). Interacts with SH3BGRL. Interacts with IRGM; enhancing BECN1-interacting partners and influencing the composition of the BECN1 complex. Interacts with ARMC3. Interacts with LRPPRC. Post-translationally, phosphorylation at Thr-117 by DAPK1 reduces its interaction with BCL2 and BCL2L1 and promotes induction of autophagy. In response to autophagic stimuli, phosphorylated at serine residues by AMPK in an ATG14-dependent manner, and this phosphorylation is critical for maximally efficient autophagy. In terms of processing, polyubiquitinated by NEDD4, both with 'Lys-11'- and 'Lys-63'-linkages. 'Lys-11'-linked polyubiquitination leads to degradation and is enhanced when the stabilizing interaction partner VPS34 is depleted. Deubiquitinated by USP10 and USP13, leading to stabilize the PIK3C3/VPS34-containing complexes. Polyubiquitinated at Lys-400 with 'Lys-48'-linkages. 'Lys-48'-linked polyubiquitination of Lys-400 leads to degradation. Deubiquitinated by ATXN3, leading to stabilization. Ubiquitinated at Lys-435 via 'Lys-63'-linkage by the DCX(AMBRA1) complex, thereby increasing the association between BECN1 and PIK3C3 to promote PIK3C3 activity. 'Lys-48'-linked ubiquitination by RNF216 leads to proteasomal degradation and autophagy inhibition. Proteolytically processed by caspases including CASP8 and CASP3; the C-terminal fragments lack autophagy-inducing capacity and are proposed to induce apoptosis. Thus the cleavage is proposed to be an determinant to switch from autophagy to apoptosis pathways affecting cellular homeostasis including viral infections and survival of tumor cells.

The protein localises to the cytoplasm. The protein resides in the golgi apparatus. It localises to the trans-Golgi network membrane. Its subcellular location is the endosome membrane. It is found in the endoplasmic reticulum membrane. The protein localises to the mitochondrion membrane. The protein resides in the cytoplasmic vesicle. It localises to the autophagosome. Its subcellular location is the mitochondrion. It is found in the nucleus. Functionally, plays a central role in autophagy. Acts as a core subunit of the PI3K complex that mediates formation of phosphatidylinositol 3-phosphate; different complex forms are believed to play a role in multiple membrane trafficking pathways: PI3KC3-C1 is involved in initiation of autophagosomes and PI3KC3-C2 in maturation of autophagosomes and endocytosis. Involved in regulation of degradative endocytic trafficking and required for the abscission step in cytokinesis, probably in the context of PI3KC3-C2. Essential for the formation of PI3KC3-C2 but not PI3KC3-C1 PI3K complex forms. Involved in endocytosis. May play a role in antiviral host defense. Its function is as follows. Beclin-1-C 35 kDa localized to mitochondria can promote apoptosis; it induces the mitochondrial translocation of BAX and the release of proapoptotic factors. This chain is Beclin-1 (Becn1), found in Rattus norvegicus (Rat).